Reading from the N-terminus, the 211-residue chain is Uracil phosphoribosyltransferase (211 aa).

Residues R78, R103, and 130–138 (DPMLATGGT) each bind 5-phospho-alpha-D-ribose 1-diphosphate. Uracil contacts are provided by residues I195 and 200 to 202 (GDA). Residue D201 coordinates 5-phospho-alpha-D-ribose 1-diphosphate.

This sequence belongs to the UPRTase family. Requires Mg(2+) as cofactor.

It catalyses the reaction UMP + diphosphate = 5-phospho-alpha-D-ribose 1-diphosphate + uracil. The protein operates within pyrimidine metabolism; UMP biosynthesis via salvage pathway; UMP from uracil: step 1/1. With respect to regulation, allosterically activated by GTP. Its function is as follows. Catalyzes the conversion of uracil and 5-phospho-alpha-D-ribose 1-diphosphate (PRPP) to UMP and diphosphate. In Kocuria rhizophila (strain ATCC 9341 / DSM 348 / NBRC 103217 / DC2201), this protein is Uracil phosphoribosyltransferase.